A 123-amino-acid chain; its full sequence is PCNA-associated factor (123 aa).

A disordered region spans residues 1–123 (MVRTKADCAG…SEEAADSGDE (123 aa)). The D-box signature appears at 26–37 (RKTFGSSSSGSN). The PIP-box signature appears at 66–77 (QKGIGDFFGSPS). A KEN box motif is present at residues 83–85 (KEN). The Initiation motif signature appears at 93–105 (EAGGSGAGKKPRK). Positions 113–123 (PSEEAADSGDE) are enriched in acidic residues.

In terms of assembly, interacts with pcna.

Its subcellular location is the nucleus. It is found in the cytoplasm. It localises to the perinuclear region. PCNA-binding protein that acts as a regulator of DNA repair during DNA replication. Following DNA damage, the interaction with pcna is disrupted, facilitating the interaction between monoubiquitinated pcna and the translesion DNA synthesis DNA polymerase eta (polh) at stalled replisomes, facilitating the bypass of replication-fork-blocking lesions. Also acts as a regulator of centrosome number. The protein is PCNA-associated factor of Xenopus laevis (African clawed frog).